The sequence spans 91 residues: Mercuric transport protein periplasmic component (91 aa).

The N-terminal stretch at 1–19 (MKKLFASLAIAAVVAPVWA) is a signal peptide. In terms of domain architecture, HMA spans 22 to 88 (QTVTLSVPGM…ATEDAGYPSS (67 aa)). 2 residues coordinate Hg(2+): Cys33 and Cys36.

The protein belongs to the MerP family. In terms of assembly, monomer.

It is found in the periplasm. In terms of biological role, involved in mercury resistance. Acts as a mercury scavenger that specifically binds to a mercuric ion in the periplasm and probably passes it to the cytoplasmic mercuric reductase MerA via the mercuric transport protein MerT. The protein is Mercuric transport protein periplasmic component of Serratia marcescens.